Consider the following 178-residue polypeptide: Large ribosomal subunit protein eL20 (178 aa).

Belongs to the eukaryotic ribosomal protein eL20 family.

The sequence is that of Large ribosomal subunit protein eL20 (RPL18A) from Castanea sativa (Sweet chestnut).